The sequence spans 253 residues: 3-deoxy-manno-octulosonate cytidylyltransferase (253 aa).

This sequence belongs to the KdsB family.

The protein localises to the cytoplasm. The enzyme catalyses 3-deoxy-alpha-D-manno-oct-2-ulosonate + CTP = CMP-3-deoxy-beta-D-manno-octulosonate + diphosphate. Its pathway is nucleotide-sugar biosynthesis; CMP-3-deoxy-D-manno-octulosonate biosynthesis; CMP-3-deoxy-D-manno-octulosonate from 3-deoxy-D-manno-octulosonate and CTP: step 1/1. It functions in the pathway bacterial outer membrane biogenesis; lipopolysaccharide biosynthesis. Activates KDO (a required 8-carbon sugar) for incorporation into bacterial lipopolysaccharide in Gram-negative bacteria. This Edwardsiella ictaluri (strain 93-146) protein is 3-deoxy-manno-octulosonate cytidylyltransferase.